Consider the following 597-residue polypeptide: Phosphoinositide phospholipase C 4 (597 aa).

One can recognise an EF-hand domain in the interval 26-60; sequence GPVEDVRDLFEKYTEGDAHMSPEQLQKLMTEEGGE. The PI-PLC X-box domain maps to 114–257; the sequence is QNMDAPLSHY…LKEKILISTK (144 aa). Residues histidine 129 and histidine 174 contribute to the active site. The span at 259 to 290 shows a compositional bias: basic and acidic residues; sequence PKEYLEANDTKEKDNGEKGKDSDEDVWGKEPE. The segment at 259–324 is disordered; sequence PKEYLEANDT…ERGSCESDTS (66 aa). The span at 293 to 309 shows a compositional bias: polar residues; that stretch reads ISTQSDLDKVTSSVNDL. Residues 333 to 449 enclose the PI-PLC Y-box domain; the sequence is KRLIAIHAGK…GYVKKPDFLM (117 aa). The C2 domain maps to 449–579; that stretch reads MDASPNGQDF…QGIRAVPLFN (131 aa).

The cofactor is Ca(2+). As to expression, low expression in leaves, roots, flowers and siliques. Expressed in pollen and in cells of the stigma surface.

The protein localises to the cytoplasm. It is found in the cytosol. It localises to the cell membrane. It catalyses the reaction a 1,2-diacyl-sn-glycero-3-phospho-(1D-myo-inositol-4,5-bisphosphate) + H2O = 1D-myo-inositol 1,4,5-trisphosphate + a 1,2-diacyl-sn-glycerol + H(+). Functionally, the production of the second messenger molecules diacylglycerol (DAG) and inositol 1,4,5-trisphosphate (IP3) is mediated by activated phosphatidylinositol-specific phospholipase C enzymes. In Arabidopsis thaliana (Mouse-ear cress), this protein is Phosphoinositide phospholipase C 4 (PLC4).